A 539-amino-acid polypeptide reads, in one-letter code: Propionyl-CoA carboxylase beta chain, mitochondrial (539 aa).

A mitochondrion-targeting transit peptide spans 1–28 (MAAALRVAAVGARLSVLASGLRAAVRSL). The CoA carboxyltransferase N-terminal domain occupies 32 to 290 (ATSVNERIEN…SSQDPAPVRE (259 aa)). The carboxyltransferase stretch occupies residues 32–533 (ATSVNERIEN…SKKVQRPWRK (502 aa)). The residue at position 71 (serine 71) is a Phosphoserine. Lysine 99 bears the N6-acetyllysine; alternate mark. Lysine 99 carries the N6-succinyllysine; alternate modification. The residue at position 248 (lysine 248) is an N6-succinyllysine. A CoA carboxyltransferase C-terminal domain is found at 294–533 (PSDRLVPELD…SKKVQRPWRK (240 aa)). Residues 325-358 (DEREFFEIMPNYAKNIIVGFARMNGRTVGIVGNQ) form an acyl-CoA binding region. 2 positions are modified to N6-acetyllysine; alternate: lysine 474 and lysine 489. N6-succinyllysine; alternate occurs at positions 474 and 489.

Belongs to the AccD/PCCB family. In terms of assembly, the holoenzyme is a dodecamer composed of 6 PCCA/alpha subunits and 6 PCCB/beta subunits.

It is found in the mitochondrion matrix. The enzyme catalyses propanoyl-CoA + hydrogencarbonate + ATP = (S)-methylmalonyl-CoA + ADP + phosphate + H(+). It catalyses the reaction butanoyl-CoA + hydrogencarbonate + ATP = (2S)-ethylmalonyl-CoA + ADP + phosphate + H(+). Its pathway is metabolic intermediate metabolism; propanoyl-CoA degradation; succinyl-CoA from propanoyl-CoA: step 1/3. Its function is as follows. This is one of the 2 subunits of the biotin-dependent propionyl-CoA carboxylase (PCC), a mitochondrial enzyme involved in the catabolism of odd chain fatty acids, branched-chain amino acids isoleucine, threonine, methionine, and valine and other metabolites. Propionyl-CoA carboxylase catalyzes the carboxylation of propionyl-CoA/propanoyl-CoA to D-methylmalonyl-CoA/(S)-methylmalonyl-CoA. Within the holoenzyme, the alpha subunit catalyzes the ATP-dependent carboxylation of the biotin carried by the biotin carboxyl carrier (BCC) domain, while the beta subunit then transfers the carboxyl group from carboxylated biotin to propionyl-CoA. Propionyl-CoA carboxylase also significantly acts on butyryl-CoA/butanoyl-CoA, which is converted to ethylmalonyl-CoA/(2S)-ethylmalonyl-CoA at a much lower rate. Other alternative minor substrates include (2E)-butenoyl-CoA/crotonoyl-CoA. This Homo sapiens (Human) protein is Propionyl-CoA carboxylase beta chain, mitochondrial.